We begin with the raw amino-acid sequence, 189 residues long: Protein Rex (189 aa).

A compositionally biased stretch (basic residues) spans 1-16; it reads MPKTRRGPRRSQRKRP. Positions 1-26 are disordered; the sequence is MPKTRRGPRRSQRKRPPTPWPTSQGL. The Nuclear localization signal, and RNA-binding (RxRE) motif lies at 2–18; that stretch reads PKTRRGPRRSQRKRPPT. The segment at 56–70 is homomultimerization; sequence RPAYIVTPYWPPVQS. Position 70 is a phosphoserine; by host (Ser-70). The Nuclear export signal signature appears at 82–93; sequence LSAQLYSSLSLG. The interval 87–189 is disordered; sequence YSSLSLGSPP…PPSPGPSCPR (103 aa). Pro residues predominate over residues 115-125; it reads IQPPTFHPPSS. Positions 123-131 are homomultimerization; sequence PSSRPYANT. A Phosphothreonine; by host modification is found at Thr-174. A Phosphoserine; by host modification is found at Ser-177. The span at 178–189 shows a compositional bias: pro residues; the sequence is FPPPSPGPSCPR.

This sequence belongs to the deltaretrovirus Rex protein family. As to quaternary structure, homomultimer. Multimeric assembly is essential for activity and involves XPO1. Binds to human XPO1 and KPNB1. Interacts (via N-terminal nuclear localization signal) with human NPM1. Post-translationally, phosphorylated.

It localises to the host nucleus. The protein resides in the host nucleolus. The protein localises to the host cytoplasm. Its function is as follows. Rex escorts unspliced gag-pro-pol and singly spliced env mRNAs out of the nucleus of infected cells. These mRNAs carry a recognition sequence called Rex responsive element (RxRE or XRE) located at the 3' region of the long terminal repeat (LTR). This function is essential since most HTLV proteins are translated from unspliced or partially spliced pre-mRNAs that cannot exit the nucleus by the pathway used by fully processed cellular mRNAs. Rex itself is translated from a fully spliced mRNA that probably readily exits the nucleus. Rex's nuclear localization signal (NLS) binds directly to KPNB1/importin beta-1 without previous binding to KPNA1/importin alpha-1. KPNB1 binds to the GDP bound form of RAN (Ran-GDP) and targets Rex to the nucleus. In the nucleus, the conversion from Ran-GDP to Ran-GTP dissociates Rex from KPNB1 and allows Rex's binding to the RRE in viral pre-mRNAs. Rex multimerizes on the RRE via cooperative assembly. This multimerization is critical for its full biological activity, since it may shield the viral RNA from being spliced or down-regulated, and probably exposes Rex's nuclear export signal (NES) to the surface. Rex can then form a complex with XPO1/CRM1, RANBP3 and Ran-GTP, leading to nuclear export of the complex. Conversion from Ran-GTP to Ran-GDP mediates dissociation of the Rex/RRE/XPO1/RANBP3/RAN complex, so that Rex can return to the nucleus for a subsequent round of export. The polypeptide is Protein Rex (Homo sapiens (Human)).